A 943-amino-acid polypeptide reads, in one-letter code: Isoleucine--tRNA ligase (943 aa).

Residues 58–68 (PYANGSIHIGH) carry the 'HIGH' region motif. Position 567 (Glu-567) interacts with L-isoleucyl-5'-AMP. The 'KMSKS' region signature appears at 608–612 (KMSKS). ATP is bound at residue Lys-611. Cys-906, Cys-909, Cys-926, and Cys-929 together coordinate Zn(2+).

The protein belongs to the class-I aminoacyl-tRNA synthetase family. IleS type 1 subfamily. As to quaternary structure, monomer. Zn(2+) is required as a cofactor.

The protein resides in the cytoplasm. It catalyses the reaction tRNA(Ile) + L-isoleucine + ATP = L-isoleucyl-tRNA(Ile) + AMP + diphosphate. Its function is as follows. Catalyzes the attachment of isoleucine to tRNA(Ile). As IleRS can inadvertently accommodate and process structurally similar amino acids such as valine, to avoid such errors it has two additional distinct tRNA(Ile)-dependent editing activities. One activity is designated as 'pretransfer' editing and involves the hydrolysis of activated Val-AMP. The other activity is designated 'posttransfer' editing and involves deacylation of mischarged Val-tRNA(Ile). This is Isoleucine--tRNA ligase from Pseudomonas aeruginosa (strain UCBPP-PA14).